A 267-amino-acid chain; its full sequence is Corrinoid adenosyltransferase EutT (267 aa).

A divalent metal cation is bound by residues cysteine 80 and cysteine 83.

The protein belongs to the Cob(I)alamin adenosyltransferase family. EutT subfamily. As to quaternary structure, homodimer. A divalent metal cation serves as cofactor.

Its subcellular location is the bacterial microcompartment. The enzyme catalyses 2 cob(II)alamin + reduced [electron-transfer flavoprotein] + 2 ATP + 2 H2O = 2 adenosylcob(III)alamin + oxidized [electron-transfer flavoprotein] + 2 phosphate + 2 diphosphate + 3 H(+). The catalysed reaction is 2 cob(II)inamide + reduced [electron-transfer flavoprotein] + 2 ATP + 2 H2O = 2 adenosylcob(III)inamide + oxidized [electron-transfer flavoprotein] + 2 phosphate + 2 diphosphate + 3 H(+). Its pathway is amine and polyamine degradation; ethanolamine degradation. In terms of biological role, converts cyanocobalamin (CN-B12) to adenosylcobalamin (AdoCbl), the inducer of the eut operon. Is not active on cobinamide nor other intermediates in the adenosylcobalamin synthetic pathway. Allows full induction of the eut operon. Can use ADP, CTP and dATP in place of ATP, and cobinamide in place of cobalamin, none are as efficiently used as ATP and cobalamin. Expression of the eut operon allows this bacteria to use ethanolamine (EA) as a carbon, nitrogen and energy source. It relies on cobalamin (vitamin B12) both as a cofactor for the ethanolamine ammonia-lyase (EAL) activity and to induce the operon. EA enhances bacterial survival in macrophages in a concentration-dependent manner, suggesting it is an important nutrient during infection. This is Corrinoid adenosyltransferase EutT from Salmonella typhimurium (strain LT2 / SGSC1412 / ATCC 700720).